A 156-amino-acid polypeptide reads, in one-letter code: SsrA-binding protein (156 aa).

A disordered region spans residues tyrosine 134–arginine 156.

Belongs to the SmpB family.

The protein localises to the cytoplasm. Required for rescue of stalled ribosomes mediated by trans-translation. Binds to transfer-messenger RNA (tmRNA), required for stable association of tmRNA with ribosomes. tmRNA and SmpB together mimic tRNA shape, replacing the anticodon stem-loop with SmpB. tmRNA is encoded by the ssrA gene; the 2 termini fold to resemble tRNA(Ala) and it encodes a 'tag peptide', a short internal open reading frame. During trans-translation Ala-aminoacylated tmRNA acts like a tRNA, entering the A-site of stalled ribosomes, displacing the stalled mRNA. The ribosome then switches to translate the ORF on the tmRNA; the nascent peptide is terminated with the 'tag peptide' encoded by the tmRNA and targeted for degradation. The ribosome is freed to recommence translation, which seems to be the essential function of trans-translation. In Latilactobacillus sakei subsp. sakei (strain 23K) (Lactobacillus sakei subsp. sakei), this protein is SsrA-binding protein.